We begin with the raw amino-acid sequence, 724 residues long: Cyclin-T1 (724 aa).

Residue serine 117 is modified to Phosphoserine. A Nuclear localization signal motif is present at residues 253 to 270; sequence KRIRNWRAYQAAMKTKPD. Lysine 342 is covalently cross-linked (Glycyl lysine isopeptide (Lys-Gly) (interchain with G-Cter in SUMO2)). A coiled-coil region spans residues 384 to 425; it reads SAKVSLKEYRAKHAEELAAQKRQLENMEANVKSQYAYAAQNL. Serine 388 carries the post-translational modification Phosphoserine. Lysine 390 is subject to N6-acetyllysine. A Glycyl lysine isopeptide (Lys-Gly) (interchain with G-Cter in SUMO2) cross-link involves residue lysine 415. ADP-ribosylserine is present on residues serine 416, serine 473, and serine 474. The segment at 479 to 549 is histidine-rich domain (HRD); it reads IKMRIKVHSA…RPSDPKHSSQ (71 aa). Lysine 480 is covalently cross-linked (Glycyl lysine isopeptide (Lys-Gly) (interchain with G-Cter in SUMO2)). The segment covering 483–507 has biased composition (basic and acidic residues); sequence IKVHSAGDKHNSIEDSVTKSREHKE. Disordered regions lie at residues 483–586 and 691–724; these read IKVH…VFDH and PRAGAISSRSGTTDKPRPPPLPSEPPPPLPPLPK. An N6-(ADP-ribosyl)lysine modification is found at lysine 484. Histidine 486 is modified (ADP-ribosylhistidine). Residues serine 494 and serine 498 each carry the phosphoserine modification. Residues 508–529 show a composition bias toward basic residues; it reads KQRTHPSNHHHHHNHHSHRHSH. Histidine 529 carries the post-translational modification ADP-ribosylhistidine. 2 positions are modified to ADP-ribosylserine: serine 548 and serine 551. Histidine 555 bears the ADP-ribosylhistidine mark. Residues 559–569 show a composition bias toward low complexity; sequence SLSSTLSSSSS. Serine 562 bears the ADP-ribosylserine mark. Residues 708 to 724 show a composition bias toward pro residues; that stretch reads PPPLPSEPPPPLPPLPK.

This sequence belongs to the cyclin family. Cyclin C subfamily. In terms of assembly, cyclin-T1 is the predominant cyclin that associates with CDK9 to form a heterodimer called P-TEFb. P-TEFb forms a complex with AFF4/AF5Q31. Component of a complex which is at least composed of HTATSF1/Tat-SF1, P-TEFb complex, RNA pol II, SUPT5H, and NCL/nucleolin. Component of the 7SK snRNP complex at least composed of P-TEFb (composed of CDK9 and CCNT1/cyclin-T1), HEXIM1, HEXIM2, BCDIN3, SART3 proteins and 7SK and U6 snRNAs. Interacts (via central region) with ZMYND8 (via N-terminus); the interaction is direct and the association appears to occur between homodimeric ZMYND8 and the activated form of the P-TEFb complex. Interacts with BRD4, targets chromatin binding. Interacts with JMJD6. Interacts with MDFIC. Interacts with HSF1. Interacts with HTATSF1. Interacts with TBX21. In terms of processing, ADP-ribosylation on serine residues by PARP1 in response to DNA damage disrupts the phase separation activity of CCNT1, thereby preventing activation of CDK9.

Its subcellular location is the nucleus. Regulatory subunit of the cyclin-dependent kinase pair (CDK9/cyclin-T1) complex, also called positive transcription elongation factor B (P-TEFb), which facilitates the transition from abortive to productive elongation by phosphorylating the CTD (C-terminal domain) of the large subunit of RNA polymerase II (RNA Pol II). Required to activate the protein kinase activity of CDK9: acts by mediating formation of liquid-liquid phase separation (LLPS) that enhances binding of P-TEFb to the CTD of RNA Pol II. In Mus musculus (Mouse), this protein is Cyclin-T1 (Ccnt1).